A 379-amino-acid chain; its full sequence is Queuine tRNA-ribosyltransferase (379 aa).

The active-site Proton acceptor is the Asp-94. Residues Asp-94 to Phe-98, Asp-148, Gln-191, and Gly-218 each bind substrate. Residues Gly-249–Ala-255 are RNA binding. The Nucleophile role is filled by Asp-268. The interval Thr-273–Arg-277 is RNA binding; important for wobble base 34 recognition. Zn(2+) is bound by residues Cys-306, Cys-308, Cys-311, and His-337.

Belongs to the queuine tRNA-ribosyltransferase family. As to quaternary structure, homodimer. Within each dimer, one monomer is responsible for RNA recognition and catalysis, while the other monomer binds to the replacement base PreQ1. Requires Zn(2+) as cofactor.

The catalysed reaction is 7-aminomethyl-7-carbaguanine + guanosine(34) in tRNA = 7-aminomethyl-7-carbaguanosine(34) in tRNA + guanine. The protein operates within tRNA modification; tRNA-queuosine biosynthesis. Its function is as follows. Catalyzes the base-exchange of a guanine (G) residue with the queuine precursor 7-aminomethyl-7-deazaguanine (PreQ1) at position 34 (anticodon wobble position) in tRNAs with GU(N) anticodons (tRNA-Asp, -Asn, -His and -Tyr). Catalysis occurs through a double-displacement mechanism. The nucleophile active site attacks the C1' of nucleotide 34 to detach the guanine base from the RNA, forming a covalent enzyme-RNA intermediate. The proton acceptor active site deprotonates the incoming PreQ1, allowing a nucleophilic attack on the C1' of the ribose to form the product. After dissociation, two additional enzymatic reactions on the tRNA convert PreQ1 to queuine (Q), resulting in the hypermodified nucleoside queuosine (7-(((4,5-cis-dihydroxy-2-cyclopenten-1-yl)amino)methyl)-7-deazaguanosine). The protein is Queuine tRNA-ribosyltransferase of Staphylococcus haemolyticus (strain JCSC1435).